A 534-amino-acid polypeptide reads, in one-letter code: ATP synthase subunit alpha 2 (534 aa).

175 to 182 (GDRQTGKT) is an ATP binding site. A disordered region spans residues 506–534 (FQPAPEPETAPKTKTDIKPKPKAAGGESS). Positions 514–524 (TAPKTKTDIKP) are enriched in basic and acidic residues.

It belongs to the ATPase alpha/beta chains family. In terms of assembly, F-type ATPases have 2 components, CF(1) - the catalytic core - and CF(0) - the membrane proton channel. CF(1) has five subunits: alpha(3), beta(3), gamma(1), delta(1), epsilon(1). CF(0) has three main subunits: a(1), b(2) and c(9-12). The alpha and beta chains form an alternating ring which encloses part of the gamma chain. CF(1) is attached to CF(0) by a central stalk formed by the gamma and epsilon chains, while a peripheral stalk is formed by the delta and b chains.

The protein resides in the cell inner membrane. The enzyme catalyses ATP + H2O + 4 H(+)(in) = ADP + phosphate + 5 H(+)(out). Produces ATP from ADP in the presence of a proton gradient across the membrane. The alpha chain is a regulatory subunit. The chain is ATP synthase subunit alpha 2 from Albidiferax ferrireducens (strain ATCC BAA-621 / DSM 15236 / T118) (Rhodoferax ferrireducens).